Consider the following 292-residue polypeptide: ER membrane protein complex subunit 2 (292 aa).

The TPR repeat unit spans residues 163-196 (AELWWYASEIYFEMGQFEKACYCLEQVLCITPFN).

This sequence belongs to the EMC2 family. As to quaternary structure, component of the ER membrane protein complex (EMC), which is composed of EMC1, EMC2, EMC3, EMC4, EMC5 and EMC6.

The protein localises to the endoplasmic reticulum membrane. Part of the endoplasmic reticulum membrane protein complex (EMC) that enables the energy-independent insertion into endoplasmic reticulum membranes of newly synthesized membrane proteins. Preferentially accommodates proteins with transmembrane domains that are weakly hydrophobic or contain destabilizing features such as charged and aromatic residues. Involved in the cotranslational insertion of multi-pass membrane proteins in which stop-transfer membrane-anchor sequences become ER membrane spanning helices. It is also required for the post-translational insertion of tail-anchored/TA proteins in endoplasmic reticulum membranes. By mediating the proper cotranslational insertion of N-terminal transmembrane domains in an N-exo topology, with translocated N-terminus in the lumen of the ER, controls the topology of multi-pass membrane proteins. The chain is ER membrane protein complex subunit 2 (EMC2) from Saccharomyces cerevisiae (strain ATCC 204508 / S288c) (Baker's yeast).